An 86-amino-acid chain; its full sequence is Mu-theraphotoxin-Hhn1c (86 aa).

The first 21 residues, 1-21 (MKASMFLALAGLALLFVVCYA), serve as a signal peptide directing secretion. A propeptide spanning residues 22 to 49 (SESEEKEFSNELLSSVLAVDDNSKGEER) is cleaved from the precursor. 3 cysteine pairs are disulfide-bonded: Cys51/Cys66, Cys58/Cys73, and Cys65/Cys80. Ile84 carries the post-translational modification Isoleucine amide.

Belongs to the neurotoxin 10 (Hwtx-1) family. 22 (Htx-4) subfamily. In terms of assembly, monomer. In terms of tissue distribution, expressed by the venom gland.

It localises to the secreted. Its function is as follows. Neurotoxin. Selectively blocks neuronal tetrodotoxin-sensitive voltage-gated sodium channels (Nav). Does not affect tetrodotoxin-resistant voltage-gated sodium channels or calcium channels. The polypeptide is Mu-theraphotoxin-Hhn1c (Cyriopagopus hainanus (Chinese bird spider)).